The primary structure comprises 1174 residues: Male determiner protein Mdmd(Y) (1174 aa).

Basic and acidic residues predominate over residues 1–15 (MNATDAESRKPENKP). Disordered regions lie at residues 1-51 (MNAT…SGQR), 79-109 (RKDG…HPVE), and 136-259 (KQLS…LRRS). Residues 16-35 (SSESSSSGSTSGSSDGEVSS) are compositionally biased toward low complexity. The segment covering 36–47 (KTYFKNNKSKVL) has biased composition (polar residues). The span at 79-92 (RKDGSNEMLPKEDS) shows a compositional bias: basic and acidic residues. Positions 138-153 (LSAYRSRSRSTRLSYS) are enriched in low complexity. Positions 167–180 (SRYKKSVLRNRRTS) are enriched in basic residues. A compositionally biased stretch (basic and acidic residues) spans 183–200 (HGRDSSTTKRSVSRDKDN). Residues 201-223 (RLRRRIGSSRSHTRSHSRFRRSE) show a composition bias toward basic residues. Residues 235-259 (RSQERRHERRRSMSSDYERIALRRS) are compositionally biased toward basic and acidic residues. One can recognise an MIF4G domain in the interval 348–531 (KKYIHGYINK…KVLFQVRRDG (184 aa)). Residues 597 to 608 (DSDGSFGSGSNS) show a composition bias toward low complexity. The interval 597–616 (DSDGSFGSGSNSETALSDCD) is disordered. The region spanning 641–757 (ALRRTIYLTL…SWDVLDCIKL (117 aa)) is the MI domain. Positions 840-857 (SAPSSSSSSSLSSELSAP) are enriched in low complexity. Disordered regions lie at residues 840-1045 (SAPS…SRTK) and 1089-1135 (KGGP…SREY). 2 stretches are compositionally biased toward basic residues: residues 869–886 (KKKH…KNPS) and 895–909 (IVGK…KTIK). Over residues 910–924 (RRTDKDNSSSKDNFL) the composition is skewed to basic and acidic residues. The span at 926 to 957 (SESSSNESISLDSLSSELFAPSSYSSSESSND) shows a compositional bias: low complexity. Basic residues predominate over residues 963-1001 (KHKGKNKKMTKKKNPSNKREKTKKKLSKNKKAPNKNTKK). Residues 1010-1020 (SSESSISESKS) show a composition bias toward low complexity. The segment covering 1034–1045 (RKKRVTSKSRTK) has biased composition (basic residues). A compositionally biased stretch (basic and acidic residues) spans 1089–1118 (KGGPNCRKDNYGNRQNHEISQRHDSEIKRR). Residues 1119-1130 (REERKKRHHEKN) show a composition bias toward basic residues.

It belongs to the CWC22 family. In terms of assembly, component of the spliceosome C complex.

It is found in the nucleus speckle. Functionally, male determiner protein (M-factor) that controls male somatic sexual differentiation. Acts as a dominant factor that regulates the mRNA splicing of transformer (tra) and doublesex (dsx) transcripts and promotes expression of male splice forms of tra and dsx. Probably acts as a component of the spliceosome C complex required for mRNA splicing factor and exon-junction complex (EJC) assembly. Hinders eIF4AIII from non-specifically binding RNA and escorts it to the splicing machinery to promote EJC assembly on mature mRNAs. This Musca domestica (House fly) protein is Male determiner protein Mdmd(Y).